Consider the following 290-residue polypeptide: Signal recognition particle receptor FtsY (290 aa).

GTP-binding positions include 91–98 (GTNGSGKT), 173–177 (DTSGR), and 237–240 (TKVD).

It belongs to the GTP-binding SRP family. FtsY subfamily. Part of the signal recognition particle protein translocation system, which is composed of SRP and FtsY.

The protein localises to the cell inner membrane. Its subcellular location is the cytoplasm. It catalyses the reaction GTP + H2O = GDP + phosphate + H(+). Involved in targeting and insertion of nascent membrane proteins into the cytoplasmic membrane. Acts as a receptor for the complex formed by the signal recognition particle (SRP) and the ribosome-nascent chain (RNC). In Chlamydia pneumoniae (Chlamydophila pneumoniae), this protein is Signal recognition particle receptor FtsY.